The following is a 283-amino-acid chain: Bifunctional protein FolD (283 aa).

NADP(+) is bound by residues 166 to 168 (GAS) and I232.

It belongs to the tetrahydrofolate dehydrogenase/cyclohydrolase family. As to quaternary structure, homodimer.

The catalysed reaction is (6R)-5,10-methylene-5,6,7,8-tetrahydrofolate + NADP(+) = (6R)-5,10-methenyltetrahydrofolate + NADPH. It carries out the reaction (6R)-5,10-methenyltetrahydrofolate + H2O = (6R)-10-formyltetrahydrofolate + H(+). Its pathway is one-carbon metabolism; tetrahydrofolate interconversion. Functionally, catalyzes the oxidation of 5,10-methylenetetrahydrofolate to 5,10-methenyltetrahydrofolate and then the hydrolysis of 5,10-methenyltetrahydrofolate to 10-formyltetrahydrofolate. The protein is Bifunctional protein FolD of Mannheimia succiniciproducens (strain KCTC 0769BP / MBEL55E).